The primary structure comprises 60 residues: Cytotoxin 8 (60 aa).

Disulfide bonds link C3–C21, C14–C38, C42–C53, and C54–C59.

This sequence belongs to the three-finger toxin family. Short-chain subfamily. Type IA cytotoxin sub-subfamily. Monomer in solution; Homodimer and oligomer in the presence of negatively charged lipids forming a pore with a size ranging between 20 and 30 Angstroms. In terms of tissue distribution, expressed by the venom gland.

The protein localises to the secreted. The protein resides in the target cell membrane. Functionally, shows cytolytic activity on many different cells by forming pore in lipid membranes. In vivo, increases heart rate or kills the animal by cardiac arrest. In addition, it binds to heparin with high affinity, interacts with Kv channel-interacting protein 1 (KCNIP1) in a calcium-independent manner, and binds to integrin alpha-V/beta-3 (ITGAV/ITGB3) with moderate affinity. The protein is Cytotoxin 8 of Naja annulifera (Banded Egyptian cobra).